Consider the following 202-residue polypeptide: Adenylyl-sulfate kinase (202 aa).

Residue 35-42 (GLSGSGKS) participates in ATP binding. Serine 109 functions as the Phosphoserine intermediate in the catalytic mechanism.

Belongs to the APS kinase family.

The catalysed reaction is adenosine 5'-phosphosulfate + ATP = 3'-phosphoadenylyl sulfate + ADP + H(+). It functions in the pathway sulfur metabolism; hydrogen sulfide biosynthesis; sulfite from sulfate: step 2/3. Catalyzes the synthesis of activated sulfate. This chain is Adenylyl-sulfate kinase, found in Bacteroides fragilis (strain YCH46).